A 571-amino-acid chain; its full sequence is Streptolysin O (571 aa).

The N-terminal stretch at 1–33 (MSNKKTFKKYSRVAGLLTVALIIGNLVTANAES) is a signal peptide. Disordered regions lie at residues 32–56 (ESNKQNTASTETTTTNEQPKPESSE) and 81–108 (KEMPLESAEKEEKKSEDKKKSEEDHTEE). Residues 37 to 48 (NTASTETTTTNE) show a composition bias toward low complexity. 4 beta stranded membrane-spanning segments follow: residues 260–273 (KSQIEAALNVNSKI), 280–289 (IDFKSISKGE), 358–367 (SNDVEAAFSA), and 375–387 (KTNGKYSDILENS). Positions 529–539 (ECTGLAWEWWR) match the Conserved undecapeptide motif. Residue Thr561 is a short sequence motif, cholesterol binding.

It belongs to the cholesterol-dependent cytolysin family. In terms of assembly, homooligomeric pore complex of 35 to 50 subunits; when inserted in the host membrane.

The protein resides in the secreted. The protein localises to the host cell membrane. A cholesterol-dependent toxin that causes cytolysis by forming pores in cholesterol containing host membranes. After binding to target membranes, the protein undergoes a major conformation change, leading to its insertion in the host membrane and formation of an oligomeric pore complex. Cholesterol is required for binding to host membranes, membrane insertion and pore formation; cholesterol binding is mediated by a Thr-Leu pair in the C-terminus. Can be reversibly inactivated by oxidation. The protein is Streptolysin O (slo) of Streptococcus pyogenes serotype M6 (strain ATCC BAA-946 / MGAS10394).